Here is a 633-residue protein sequence, read N- to C-terminus: Protein BZZ1 (633 aa).

The 267-residue stretch at 5–271 (LSIGNEIKDS…VVKQNKPSLN (267 aa)) folds into the F-BAR domain. Residues 138–210 (DMVNKKDNIY…INQANRTKDK (73 aa)) adopt a coiled-coil conformation. Residues Ser-327, Ser-463, Ser-472, and Ser-476 each carry the phosphoserine modification. The segment at 429–495 (VDSKPSSGGS…KKTTQNSSDD (67 aa)) is disordered. Residues 474 to 493 (NNSIRTTSTNNTKKTTQNSS) show a composition bias toward low complexity. SH3 domains lie at 493-555 (SDDG…ISSA) and 577-633 (LPVR…SYCK).

It belongs to the BZZ1 family. As to quaternary structure, interacts with LAS17 and MYO5.

It localises to the cytoplasm. The protein resides in the cytoskeleton. Its subcellular location is the actin patch. In terms of biological role, plays a role in endocytosis and trafficking to the vacuole. Functions with type I myosins to restore polarity of the actin cytoskeleton after NaCl stress. The polypeptide is Protein BZZ1 (BZZ1) (Saccharomyces cerevisiae (strain ATCC 204508 / S288c) (Baker's yeast)).